The sequence spans 156 residues: MMKKTKVIVLAENALTTPGKLVRYINTLNQPVIVKETCFGAYIEGEEELVDKLAQEIRNYERNRIFCKDRGYAIWDKRRCRAFRGGGPREGFHQLEAEQAVLDKIGLALDKIDKEGIKPMEEVLAKENELIKRETKIPVEEFKNIIEKVLGSKNEA.

This is an uncharacterized protein from Methanocaldococcus jannaschii (strain ATCC 43067 / DSM 2661 / JAL-1 / JCM 10045 / NBRC 100440) (Methanococcus jannaschii).